Reading from the N-terminus, the 125-residue chain is Large ribosomal subunit protein bL12 (125 aa).

It belongs to the bacterial ribosomal protein bL12 family. As to quaternary structure, homodimer. Part of the ribosomal stalk of the 50S ribosomal subunit. Forms a multimeric L10(L12)X complex, where L10 forms an elongated spine to which 2 to 4 L12 dimers bind in a sequential fashion. Binds GTP-bound translation factors.

In terms of biological role, forms part of the ribosomal stalk which helps the ribosome interact with GTP-bound translation factors. Is thus essential for accurate translation. The polypeptide is Large ribosomal subunit protein bL12 (Rickettsia canadensis (strain McKiel)).